Here is a 220-residue protein sequence, read N- to C-terminus: Guanylate kinase (220 aa).

Residues 16–195 (GLMFVLSSPS…AFESVRSILR (180 aa)) enclose the Guanylate kinase-like domain. ATP is bound at residue 23–30 (SPSGAGKT).

The protein belongs to the guanylate kinase family.

It is found in the cytoplasm. The enzyme catalyses GMP + ATP = GDP + ADP. Functionally, essential for recycling GMP and indirectly, cGMP. The polypeptide is Guanylate kinase (Rhodopseudomonas palustris (strain ATCC BAA-98 / CGA009)).